The primary structure comprises 499 residues: Cytochrome P450 76T24 (499 aa).

A helical transmembrane segment spans residues 3–23 (VDILLSLVLAFFGWAAIYFLT). N-linked (GlcNAc...) asparagine glycosylation is found at Asn-55, Asn-76, Asn-279, and Asn-284. Cys-442 is a heme binding site.

The protein belongs to the cytochrome P450 family.

It is found in the membrane. This Catharanthus roseus (Madagascar periwinkle) protein is Cytochrome P450 76T24.